The sequence spans 344 residues: L-rhamnose-proton symporter (344 aa).

10 helical membrane passes run 4–24 (AITM…CFYA), 38–58 (WSVG…AILL), 72–92 (TLLP…NYGL), 101–121 (MGIG…TPIL), 137–157 (TLLG…AGQL), 175–195 (LVLA…MNAA), 214–234 (LPSY…FCFI), 259–279 (VLLS…YAWG), 290–310 (MSWM…GLVL), and 321–341 (VGVL…VGLG).

It belongs to the L-rhamnose transporter (TC 2.A.7.6) family.

Its subcellular location is the cell inner membrane. The catalysed reaction is L-rhamnopyranose(in) + H(+)(in) = L-rhamnopyranose(out) + H(+)(out). Its function is as follows. Uptake of L-rhamnose across the cytoplasmic membrane with the concomitant transport of protons into the cell (symport system). The polypeptide is L-rhamnose-proton symporter (Enterobacter sp. (strain 638)).